The sequence spans 289 residues: ATP synthase gamma chain (289 aa).

The protein belongs to the ATPase gamma chain family. F-type ATPases have 2 components, CF(1) - the catalytic core - and CF(0) - the membrane proton channel. CF(1) has five subunits: alpha(3), beta(3), gamma(1), delta(1), epsilon(1). CF(0) has three main subunits: a, b and c.

The protein resides in the cell membrane. Produces ATP from ADP in the presence of a proton gradient across the membrane. The gamma chain is believed to be important in regulating ATPase activity and the flow of protons through the CF(0) complex. The polypeptide is ATP synthase gamma chain (Lactococcus lactis subsp. cremoris (strain SK11)).